A 243-amino-acid polypeptide reads, in one-letter code: Interleukin-27 subunit alpha (243 aa).

The signal sequence occupies residues 1-28 (MGQTAGDLGWRLSLLLLPLLLVQAGVWG).

It belongs to the IL-6 superfamily. As to quaternary structure, heterodimer with EBI3; not disulfide-linked. This heterodimer is known as interleukin IL-27. In terms of processing, O-glycosylated. Expressed in monocytes and in placenta.

Its subcellular location is the secreted. Functionally, associates with EBI3 to form the IL-27 interleukin, a heterodimeric cytokine which functions in innate immunity. IL-27 has pro- and anti-inflammatory properties, that can regulate T-helper cell development, suppress T-cell proliferation, stimulate cytotoxic T-cell activity, induce isotype switching in B-cells, and that has diverse effects on innate immune cells. Among its target cells are CD4 T-helper cells which can differentiate in type 1 effector cells (TH1), type 2 effector cells (TH2) and IL17 producing helper T-cells (TH17). It drives rapid clonal expansion of naive but not memory CD4 T-cells. It also strongly synergizes with IL-12 to trigger interferon-gamma/IFN-gamma production of naive CD4 T-cells, binds to the cytokine receptor WSX-1/TCCR which appears to be required but not sufficient for IL-27-mediated signal transduction. IL-27 potentiate the early phase of TH1 response and suppress TH2 and TH17 differentiation. It induces the differentiation of TH1 cells via two distinct pathways, p38 MAPK/TBX21- and ICAM1/ITGAL/ERK-dependent pathways. It also induces STAT1, STAT3, STAT4 and STAT5 phosphorylation and activates TBX21/T-Bet via STAT1 with resulting IL12RB2 up-regulation, an event crucial to TH1 cell commitment. It suppresses the expression of GATA3, the inhibitor TH1 cells development. In CD8 T-cells, it activates STATs as well as GZMB. IL-27 reveals to be a potent inhibitor of TH17 cell development and of IL-17 production. Indeed IL27 alone is also able to inhibit the production of IL17 by CD4 and CD8 T-cells. While IL-27 suppressed the development of pro-inflammatory Th17 cells via STAT1, it inhibits the development of anti-inflammatory inducible regulatory T-cells, iTreg, independently of STAT1. IL-27 also has an effect on cytokine production, it suppresses pro-inflammatory cytokine production such as IL2, IL4, IL5 and IL6 and activates suppressors of cytokine signaling such as SOCS1 and SOCS3. Apart from suppression of cytokine production, IL-27 also antagonizes the effects of some cytokines such as IL6 through direct effects on T-cells. Another important role of IL-27 is its antitumor activity as well as its antiangiogenic activity with activation of production of antiangiogenic chemokines such as IP-10/CXCL10 and MIG/CXCL9. In vein endothelial cells, it induces IRF1/interferon regulatory factor 1 and increase the expression of MHC class II transactivator/CIITA with resulting up-regulation of major histocompatibility complex class II. IL-27 also demonstrates antiviral activity with inhibitory properties on HIV-1 replication. The sequence is that of Interleukin-27 subunit alpha (IL27) from Homo sapiens (Human).